Consider the following 454-residue polypeptide: UPF0210 protein EUBELI_01067 (454 aa).

The protein belongs to the UPF0210 family. Homodimer.

The sequence is that of UPF0210 protein EUBELI_01067 from Lachnospira eligens (strain ATCC 27750 / DSM 3376 / VPI C15-48 / C15-B4) (Eubacterium eligens).